The chain runs to 714 residues: 2'-5'-oligoadenylate synthase 2 (714 aa).

Gly2 carries N-myristoyl glycine lipidation. OAS domain stretches follow at residues 11–336 (KPSE…SWNV) and 344–683 (TPGH…WNVP). Ser397 is an ATP binding site. Positions 409 and 480 each coordinate Mg(2+). The ATP site is built by Arg544 and Lys547.

The protein belongs to the 2-5A synthase family. As to quaternary structure, homodimer. It depends on Mg(2+) as a cofactor. Myristoylation is not essential for its activity. In terms of processing, glycosylated. Glycosylation is essential for its activity.

The protein resides in the cytoplasm. It localises to the perinuclear region. It catalyses the reaction 3 ATP = 5'-triphosphoadenylyl-(2'-&gt;5')-adenylyl-(2'-&gt;5')-adenosine + 2 diphosphate. Produced as a latent enzyme which is activated by double stranded RNA (dsRNA) generated during the course of viral infection. The dsRNA activator must be at least 15 nucleotides long, and no modification of the 2'-hydroxyl group is tolerated. ssRNA or dsDNA do not act as activators. Strongly inhibited by copper, iron and zinc ions. Partially inhibited by cobalt and nickel ions. Interferon-induced, dsRNA-activated antiviral enzyme which plays a critical role in cellular innate antiviral response. Activated by detection of double stranded RNA (dsRNA): polymerizes higher oligomers of 2'-5'-oligoadenylates (2-5A) from ATP which then bind to the inactive monomeric form of ribonuclease L (RNASEL) leading to its dimerization and subsequent activation. Activation of RNASEL leads to degradation of cellular as well as viral RNA, resulting in the inhibition of protein synthesis, thus terminating viral replication. Can mediate the antiviral effect via the classical RNASEL-dependent pathway or an alternative antiviral pathway independent of RNASEL. In addition, it may also play a role in other cellular processes such as apoptosis, cell growth, differentiation and gene regulation. May act as a negative regulator of lactation, stopping lactation in virally infected mammary gland lobules, thereby preventing transmission of viruses to neonates. Non-infected lobules would not be affected, allowing efficient pup feeding during infection. The protein is 2'-5'-oligoadenylate synthase 2 (OAS2) of Bos taurus (Bovine).